The primary structure comprises 715 residues: MSQSGAVSCCPGATNGSLGRSDGVAKMSPKDLFEQRKKYSNSNVIMHETSQYHVQHLATFIMDKSEAITSVDDAIRKLVQLSSKEKIWTQEMLLQVNDQSLRLLDIESQEELEDFPLPTVQRSQTVLNQLRYPSVLLLVCQDSEQSKPDVHFFHCDEVEAELVHEDIESALADCRLGKKMRPQTLKGHQEKIRQRQSILPPPQGPAPIPFQHRGGDSPEAKNRVGPQVPLSEPGFRRRESQEEPRAVLAQKIEKETQILNCALDDIEWFVARLQKAAEAFKQLNQRKKGKKKGKKAPAEGVLTLRARPPSEGEFIDCFQKIKLAINLLAKLQKHIQNPSAAELVHFLFGPLDLIVNTCSGPDIARSVSCPLLSRDAVDFLRGHLVPKEMSLWESLGESWMRPRSEWPREPQVPLYVPKFHSGWEPPVDVLQEAPWEVEGLASAPIEEVSPVSRQSIRNSQKHSPTSEPTPPGDALPPVSSPHTHRGYQPTPAMAKYVKILYDFTARNANELSVLKDEVLEVLEDGRQWWKLRSRSGQAGYVPCNILGEARPEDAGAPFEQAGQKYWGPASPTHKLPPSFPGNKDELMQHMDEVNDELIRKISNIRAQPQRHFRVERSQPVSQPLTYESGPDEVRAWLEAKAFSPRIVENLGILTGPQLFSLNKEELKKVCGEEGVRVYSQLTMQKAFLEKQQSGSELEELMNKFHSMNQRRGEDS.

In terms of domain architecture, PID spans 46–202 (MHETSQYHVQ…RQRQSILPPP (157 aa)). Residues 183–243 (QTLKGHQEKI…GFRRRESQEE (61 aa)) are disordered. The segment covering 199–208 (LPPPQGPAPI) has biased composition (pro residues). Composition is skewed to basic and acidic residues over residues 213 to 222 (RGGDSPEAKN) and 234 to 243 (GFRRRESQEE). Position 240 is a phosphoserine (serine 240). Residue threonine 303 is modified to Phosphothreonine. The tract at residues 448–487 (VSPVSRQSIRNSQKHSPTSEPTPPGDALPPVSSPHTHRGY) is disordered. Residue serine 449 is modified to Phosphoserine. Residues 451 to 466 (VSRQSIRNSQKHSPTS) show a composition bias toward polar residues. The residue at position 469 (threonine 469) is a Phosphothreonine. An SH3 domain is found at 492 to 551 (AMAKYVKILYDFTARNANELSVLKDEVLEVLEDGRQWWKLRSRSGQAGYVPCNILGEARP). Serine 570 is modified (phosphoserine).

The protein belongs to the EPS8 family. Interacts with ABI1. Part of a complex that contains SOS1, ABI1 and EPS8L2. Associates with F-actin. In terms of tissue distribution, detected in fibroblasts and placenta.

The protein resides in the cytoplasm. It is found in the cell projection. Its subcellular location is the stereocilium. Functionally, stimulates guanine exchange activity of SOS1. May play a role in membrane ruffling and remodeling of the actin cytoskeleton. In the cochlea, is required for stereocilia maintenance in adult hair cells. The protein is Epidermal growth factor receptor kinase substrate 8-like protein 2 (EPS8L2) of Homo sapiens (Human).